A 2910-amino-acid polypeptide reads, in one-letter code: Highly reducing polyketide synthase calA (2910 aa).

One can recognise a Ketosynthase family 3 (KS3) domain in the interval 8–444 (NEPLAIVGSA…GTNAHAILES (437 aa)). Catalysis depends on for beta-ketoacyl synthase activity residues Cys-181, His-320, and His-364. Positions 559-875 (VFTGQGAQYA…PYYGVLSRGT (317 aa)) are acyl transferase (AT) domain. The segment at 948 to 1082 (NQLLGTMMPD…LHIVFGPSSE (135 aa)) is N-terminal hotdog fold. The region spanning 948–1245 (NQLLGTMMPD…LKPLGALTAK (298 aa)) is the PKS/mFAS DH domain. Positions 949 to 1242 (QLLGTMMPDS…GVELKPLGAL (294 aa)) are dehydratase (DH) domain. His-980 functions as the Proton acceptor; for dehydratase activity in the catalytic mechanism. Positions 1095–1245 (MISVDNERFY…LKPLGALTAK (151 aa)) are C-terminal hotdog fold. Asp-1156 acts as the Proton donor; for dehydratase activity in catalysis. The interval 1399–1586 (EAGLWIGKII…GIDSTAPQAF (188 aa)) is methyltransferase (MT) domain. Residues 2125–2298 (TYWLCGLSGA…AATALNVGAI (174 aa)) are ketoreductase (KR)domain. Residues 2406–2488 (QSRSEVLAVV…ELAELAAEQA (83 aa)) enclose the Carrier domain. Ser-2448 is modified (O-(pantetheine 4'-phosphoryl)serine). Residues 2492–2565 (LLPGLGGEAP…TPDPHSTKGP (74 aa)) form a disordered region. Residues 2522–2534 (VPQSDETGSSSAD) show a composition bias toward polar residues. The span at 2550-2559 (GYTTPTTPDP) shows a compositional bias: low complexity. A reductase (R) domain region spans residues 2597 to 2826 (LTGVSGLLGR…DFVYVKNAAD (230 aa)).

It participates in secondary metabolite biosynthesis. Highly reducing polyketide synthase; part of the gene cluster that mediates the biosynthesis of calbistrin A and related compounds. Calbistrin A is a secondary metabolite with an interesting structure that was recently found to have bioactivity against leukemia cells. It consists of two polyketides linked by an ester bond: a bicyclic decalin containing polyketide and a linear 12 carbon dioic acid structure. The polyketide synthase calA is probably responsible for forming the decalin moiety. Because calA lacks a designated enoylreductase (ER) domain, the required activity is provided by the trans-enoyl reductase calK. Following release from the PKS, calF then probably catalyzes the oxidation and the subsequent Diels Alder cycloisomerization that lead to the formation of the decalin moiety. The decalin polyketide backbone includes two C-methyl groups, at C7 and C11 in backbone, of which the C7 position is probably methylated by the methyltransferase domain of calA. A candidate for adding the methyl group at C11, if not done by CalA, is the cluster methyltransferase calH. Several additional tailoring enzymes within the cluster could be involved in the modification of the decalin polyketide product. Those include the 3 cytochrome P450 monooxygenases CalE, CalG and CalL, of which one might be responsible for the introduction of the extra hydroxyl group attached to the backbone of the decalin moiety, at position C9 in the backbone, that allows for attachment of the linear moiety. One tailoring enzyme activity that is expected to be involved in biosynthesis of calbistrin is an acyltransferase for connecting the two polyketide synthase products, and which could be performed by the cluster acyltransferase calJ. The enzyme responsible for the biosynthesis of the linear moiety, probably a second PKS, has not been identified yet. The sequence is that of Highly reducing polyketide synthase calA from Penicillium decumbens.